A 251-amino-acid chain; its full sequence is MGSKSYPTVSDEYLAAVGKAKRKLRGLIAEKNCAPLMLRLAWHSAGTFDVSSRTGGPFGTMKNPGEQSHAANAGLDIAVRLLDPIKDQLPILSYADFYQLAGVVAVEVTGGPEVPFHPGRQDKPEPPPEGRLPDATQGSDHLRQVFSAQMGLSDKDIVALSGGHTLGRCHKERSGFEGAWTSNPLIFDNSYFTELVSGEKEGLLQLPSDKALMADPAFRPLVEKYAADEDAFFADYAEAHLKLSELGFAEE.

His-43 (proton acceptor) is an active-site residue. Residues 113 to 137 (EVPFHPGRQDKPEPPPEGRLPDATQ) form a disordered region. Positions 119-132 (GRQDKPEPPPEGRL) are enriched in basic and acidic residues. His-164 lines the heme b pocket. Residues Thr-165, Thr-181, Asn-183, Ile-186, and Asp-188 each contribute to the K(+) site.

It belongs to the peroxidase family. Ascorbate peroxidase subfamily. Heme b serves as cofactor. Expressed in aerial vegetative parts and reproductive organs. Expressed in roots, leaves, stems and flowers. Expressed in young leaves, internodes, blade ears, stems and anthers.

The protein localises to the cytoplasm. It catalyses the reaction L-ascorbate + H2O2 = L-dehydroascorbate + 2 H2O. With respect to regulation, inhibited by p-chloromercuriphenylsulfonic acid (CMPSA). In terms of biological role, plays a key role in hydrogen peroxide removal. Plays an important role in plant growth and development by protecting the seedlings from abiotic stresses through scavenging reactive oxygen species. Required for pollen viability. The polypeptide is L-ascorbate peroxidase 2, cytosolic (Oryza sativa subsp. japonica (Rice)).